The following is a 116-amino-acid chain: UPF0342 protein CTC_01059 (116 aa).

It belongs to the UPF0342 family.

In Clostridium tetani (strain Massachusetts / E88), this protein is UPF0342 protein CTC_01059.